We begin with the raw amino-acid sequence, 350 residues long: Guanine nucleotide-binding protein G(t) subunit alpha-1 (350 aa).

Positions 1–21 are disordered; that stretch reads MGAGASAEEKHSRELEKKLKE. G2 carries the N-myristoyl glycine lipid modification. The span at 7–21 shows a compositional bias: basic and acidic residues; the sequence is AEEKHSRELEKKLKE. The G-alpha domain occupies 28 to 350; the sequence is RTVKLLLLGA…KENLKDCGLF (323 aa). Residues 31–44 are G1 motif; the sequence is KLLLLGAGESGKST. A GTP-binding site is contributed by 36 to 43; sequence GAGESGKS. S43 lines the Mg(2+) pocket. A Phosphotyrosine; by SRC modification is found at Y142. GTP is bound by residues D146, 171-177, G199, 265-268, and A322; these read LRSRVKT and NKKD. Residues 169–177 are G2 motif; that stretch reads DVLRSRVKT. Residue R174 is modified to ADP-ribosylarginine; by cholera toxin. T177 serves as a coordination point for Mg(2+). The tract at residues 192-201 is G3 motif; sequence FRMFDVGGQR. The segment at 261 to 268 is G4 motif; sequence VLFLNKKD. The tract at residues 320–325 is G5 motif; it reads TCATDT. The interval 340 to 350 is interaction with RHO; the sequence is IKENLKDCGLF. C347 carries the ADP-ribosylcysteine; by pertussis toxin modification.

Belongs to the G-alpha family. G(i/o/t/z) subfamily. In terms of assembly, heterotrimeric G proteins are composed of 3 subunits alpha, beta and gamma. The alpha chain contains the guanine nucleotide binding site. Interacts with RHO. Interacts with RGS9 and PDE6G. Interacts (when myristoylated) with UNC119; interaction is required for localization in sensory neurons. As to expression, rod photoreceptor cells. Predominantly expressed in the retina followed by the ciliary body, iris and retinal pigment epithelium.

Its subcellular location is the cell projection. The protein localises to the cilium. It is found in the photoreceptor outer segment. It localises to the membrane. The protein resides in the photoreceptor inner segment. In terms of biological role, functions as a signal transducer for the rod photoreceptor RHO. Required for normal RHO-mediated light perception by the retina. Guanine nucleotide-binding proteins (G proteins) function as transducers downstream of G protein-coupled receptors (GPCRs), such as the photoreceptor RHO. The alpha chain contains the guanine nucleotide binding site and alternates between an active, GTP-bound state and an inactive, GDP-bound state. Activated RHO promotes GDP release and GTP binding. Signaling is mediated via downstream effector proteins, such as cGMP-phosphodiesterase. This is Guanine nucleotide-binding protein G(t) subunit alpha-1 (GNAT1) from Homo sapiens (Human).